A 388-amino-acid polypeptide reads, in one-letter code: Mannitol-1-phosphate 5-dehydrogenase (388 aa).

5–16 (AIQFGGGNIGRG) provides a ligand contact to NAD(+). The active site involves lysine 213.

This sequence belongs to the mannitol dehydrogenase family. Monomer.

The enzyme catalyses D-mannitol 1-phosphate + NAD(+) = beta-D-fructose 6-phosphate + NADH + H(+). In terms of biological role, catalyzes the NAD(H)-dependent interconversion of D-fructose 6-phosphate and D-mannitol 1-phosphate in the mannitol metabolic pathway. The polypeptide is Mannitol-1-phosphate 5-dehydrogenase (mpdA) (Aspergillus clavatus (strain ATCC 1007 / CBS 513.65 / DSM 816 / NCTC 3887 / NRRL 1 / QM 1276 / 107)).